An 880-amino-acid chain; its full sequence is MEKLAAGLAGLRWSMGAFPLDLIVSRCRLPTLACLGPGEYAEGVSERDILLIHSCRQWTTVTAHTLEEGHYVIGPKIDIPLQYPGKFKLLEQARDVREPVRYFSSVEEVASVFPDRIFVMEAITFSVKVVSGEFSEDSEVYNFTLHAGDELTLMGQAEILCAKTTKERSRFTTLLRKLGRAGALAGIGGPGSMGATGGGGGAARPVKSKMPCLICMNHRTNESLSLPFQCQGRFSTRSPLELQMQEGEHTVRAIIERVRLPVNVLVPSRPPRNPYDLHPVREGHCYKLVSIISKTVVLGLALRREGPAPLHFLLLTDTPRFTLPQGLLAGDPRVERLVRDSASYCRERFDPDEYSTAVREAPAELSDDCASPRHARLCLPAPRAPGAVRAPGPPGRLGPALPAPGDSDQDYVSPDWAGVSEPAGGCAEIPYEELWVHQAPESRADARARPLAGPDLISFGIVGPPRHEPEAPPPPVPPKSEAVKEECRLLHAPPVPPRGGGSCSKLTGSPPVLPHFPKLQPVHSPSSSLSYYSSGLQDGAGSRSGSGSPSPDAYSLYCYPCTWGDCKASESSSRPPPGPLPSTTTQPSQASRGLSEPLSGRTPSLLGADTPVVKNYHSCPPLFKSSRPQKSFAPFGALNPFSGPAHPSGAPAASSSGSISTSGVLATSSPTHSPGPGPGPQGQGYSAAPSSSLSSSEWQEPALEPLDPFELGQASPPELELVRCQEPRAAGAPGSGPCLSPLGQPKAFEPEGLVLRQVPASLSPAALQGPEAGGTLLFLTQGCLEGPPGSPREGATGAGVRDASSWQPPADLSALSLEEVSRSLRFIGLSEDVVSFFARERIDGSIFVQLSEDILADDFHLTKLQVKKIMQFIKGWRPKI.

Positions 12 to 320 (RWSMGAFPLD…HFLLLTDTPR (309 aa)) are CABIT. 5 disordered regions span residues 385–407 (PGAVRAPGPPGRLGPALPAPGDS), 461–483 (IVGPPRHEPEAPPPPVPPKSEAV), 527–548 (SSLSYYSSGLQDGAGSRSGSGS), 569–611 (SESS…ADTP), and 633–713 (APFG…ELGQ). Low complexity-rich tracts occupy residues 640 to 663 (PFSGPAHPSGAPAASSSGSISTSG) and 683 to 696 (QGYSAAPSSSLSSS). Phosphoserine is present on serine 740. Positions 813-877 (SALSLEEVSR…KIMQFIKGWR (65 aa)) constitute an SAM domain.

This sequence belongs to the GAREM family.

Functionally, probable adapter protein that provides a critical link between cell surface epidermal growth factor receptor and the MAPK/ERK signaling pathway. In Mus musculus (Mouse), this protein is GRB2-associated and regulator of MAPK protein 2 (Garem2).